The chain runs to 187 residues: Ribonuclease M5 (187 aa).

Positions 5–88 (KEVIVVEGKD…AFLPRKAGVP (84 aa)) constitute a Toprim domain. Mg(2+)-binding residues include Glu11, Asp57, and Asp59.

It belongs to the ribonuclease M5 family. Mg(2+) serves as cofactor.

Its subcellular location is the cytoplasm. It catalyses the reaction Endonucleolytic cleavage of RNA, removing 21 and 42 nucleotides, respectively, from the 5'- and 3'-termini of a 5S-rRNA precursor.. Its function is as follows. Required for correct processing of both the 5' and 3' ends of 5S rRNA precursor. Cleaves both sides of a double-stranded region yielding mature 5S rRNA in one step. This Lactiplantibacillus plantarum (strain ATCC BAA-793 / NCIMB 8826 / WCFS1) (Lactobacillus plantarum) protein is Ribonuclease M5.